A 142-amino-acid polypeptide reads, in one-letter code: 3-hydroxyacyl-[acyl-carrier-protein] dehydratase FabZ (142 aa).

Residue H49 is part of the active site.

It belongs to the thioester dehydratase family. FabZ subfamily.

The protein localises to the cytoplasm. The enzyme catalyses a (3R)-hydroxyacyl-[ACP] = a (2E)-enoyl-[ACP] + H2O. Functionally, involved in unsaturated fatty acids biosynthesis. Catalyzes the dehydration of short chain beta-hydroxyacyl-ACPs and long chain saturated and unsaturated beta-hydroxyacyl-ACPs. The chain is 3-hydroxyacyl-[acyl-carrier-protein] dehydratase FabZ from Clostridium novyi (strain NT).